A 456-amino-acid chain; its full sequence is Probable hexose phosphate transport protein (456 aa).

The next 11 helical transmembrane spans lie at 34-54 (IFYSMFLGYVFFYFTRKSFTF), 70-90 (LGIIGSTLYITYGISKFVSGV), 113-133 (IFFGLSSTIPLFVLFWGINGW), 161-181 (VWSTSHNIGGALIPVLTGVAI), 185-205 (GWRGAMFIPGIICIIMGFILI), 257-277 (YVLSNKWLWFLSFASFFIYVV), 302-322 (LCVSLFEIGGLFGMLLAGWLS), 331-351 (GPMNVVFSLGLLVSILGLWGT), 363-383 (FLFIIGFFLFGPQMMIGLAAA), 394-414 (ASGFTGWFAYFGAAFAGYPLG), and 421-441 (GWHGFFVALLACALIALILFL).

It belongs to the major facilitator superfamily. Organophosphate:Pi antiporter (OPA) (TC 2.A.1.4) family.

The protein localises to the cell membrane. In terms of biological role, transport protein for sugar phosphate uptake. In Chlamydia trachomatis serovar D (strain ATCC VR-885 / DSM 19411 / UW-3/Cx), this protein is Probable hexose phosphate transport protein.